The primary structure comprises 433 residues: T-box transcription factor T (433 aa).

The segment at residues 49-217 (LWLRFKELTN…YNPFAKAFLD (169 aa)) is a DNA-binding region (T-box).

Monomer. Binds DNA as a monomer.

The protein localises to the nucleus. Involved in the transcriptional regulation of genes required for mesoderm formation and differentiation. Binds to a palindromic site (called T site) and activates gene transcription when bound to such a site. This chain is T-box transcription factor T, found in Gallus gallus (Chicken).